The chain runs to 241 residues: DNA repair protein RecO (241 aa).

Belongs to the RecO family.

In terms of biological role, involved in DNA repair and RecF pathway recombination. This is DNA repair protein RecO from Roseobacter denitrificans (strain ATCC 33942 / OCh 114) (Erythrobacter sp. (strain OCh 114)).